We begin with the raw amino-acid sequence, 365 residues long: MKKTALYPWHEKAGARIIDFGGWLMPVQYSGIIAEHRAVRSAAGLFDVSHMGNFYVKGPRAEEFLQHMTTNDLSRAKNGQAQYNVMLYPNGGIVDDLIIYRIDAQTFFIIVNAGNCEKDYQWLQEHAAEYDGVVLEDHSSAMSLIALQGPKAFDILKKVLPSLDAPSLGSFHFCTLEYSGAELMVARTGYTGEIGVEICMPNEMALPLWEDLLEAGRPEGILPIGLGARDTLRLEMGYSLYGHEIDQDTNPLEARLKWVVKLDKGHFIGREACLQVELNPKRSVAGFVLEGRALPRQGCKLFNSDHQEIGRVCSGTLSPTLQEPVGTCSLLREYQKPGTRVFVEIRGTMQPGTIRPLPFVKTSLS.

It belongs to the GcvT family. The glycine cleavage system is composed of four proteins: P, T, L and H.

It carries out the reaction N(6)-[(R)-S(8)-aminomethyldihydrolipoyl]-L-lysyl-[protein] + (6S)-5,6,7,8-tetrahydrofolate = N(6)-[(R)-dihydrolipoyl]-L-lysyl-[protein] + (6R)-5,10-methylene-5,6,7,8-tetrahydrofolate + NH4(+). Its function is as follows. The glycine cleavage system catalyzes the degradation of glycine. In Chlorobium luteolum (strain DSM 273 / BCRC 81028 / 2530) (Pelodictyon luteolum), this protein is Aminomethyltransferase.